Reading from the N-terminus, the 398-residue chain is Beta-1,6-galactosyltransferase GALT29A (398 aa).

At 1–6 (MKRSVR) the chain is on the cytoplasmic side. A helical; Signal-anchor for type II membrane protein membrane pass occupies residues 7–27 (PLFSALLFAFFAATLICRVAI). The Lumenal segment spans residues 28–398 (RRSSFSFASA…FKIPLVQVYH (371 aa)). Asn-221 and Asn-346 each carry an N-linked (GlcNAc...) asparagine glycan.

The protein belongs to the glycosyltransferase 29 family. In terms of assembly, interacts with GALT31A.

The protein localises to the golgi apparatus membrane. Its function is as follows. Galactosyltransferase involved in the biosynthesis of type II arabinogalactan. Possesses galactosyltransferase (GalT) activity in vitro, transferring galactose from UDP-galactose to a mixture of various oligosaccharides derived from arabinogalactan proteins. Forms a complex with GALT31A that can work cooperatively to enhance the activities of adding galactose residues at O6 positions to beta-1,6-galactan and beta-1,3-galactan. This Arabidopsis thaliana (Mouse-ear cress) protein is Beta-1,6-galactosyltransferase GALT29A.